Reading from the N-terminus, the 316-residue chain is Erythritol catabolism regulatory protein EryD (316 aa).

Residues 23-42 (QSAVAKRLGLPSVKAHRLIA) constitute a DNA-binding region (H-T-H motif).

This sequence belongs to the SorC transcriptional regulatory family.

With respect to regulation, erythritol may act as an inducer, probably by binding to EryD and inhibiting its repressor activity. Represses the expression of the eryABCD operon, which is involved in erythritol catabolism. The polypeptide is Erythritol catabolism regulatory protein EryD (Brucella abortus (strain 2308)).